The chain runs to 133 residues: UPF0225 protein BB3385 (133 aa).

The protein belongs to the UPF0225 family.

This chain is UPF0225 protein BB3385, found in Bordetella bronchiseptica (strain ATCC BAA-588 / NCTC 13252 / RB50) (Alcaligenes bronchisepticus).